The primary structure comprises 115 residues: Protein VCF2 (115 aa).

The segment covering 1–12 (MGGCPVRKRRRN) has biased composition (basic residues). Positions 1–70 (MGGCPVRKRR…GPEGNLNQIV (70 aa)) are disordered. Positions 33–44 (FQDSQDTEFSWS) are enriched in polar residues.

Belongs to the VCF family.

In Homo sapiens (Human), this protein is Protein VCF2.